Here is a 191-residue protein sequence, read N- to C-terminus: IMP cyclohydrolase (191 aa).

The protein belongs to the archaeal IMP cyclohydrolase family.

The catalysed reaction is IMP + H2O = 5-formamido-1-(5-phospho-D-ribosyl)imidazole-4-carboxamide. The protein operates within purine metabolism; IMP biosynthesis via de novo pathway; IMP from 5-formamido-1-(5-phospho-D-ribosyl)imidazole-4-carboxamide: step 1/1. In terms of biological role, catalyzes the cyclization of 5-formylamidoimidazole-4-carboxamide ribonucleotide to IMP. This is IMP cyclohydrolase from Natronomonas pharaonis (strain ATCC 35678 / DSM 2160 / CIP 103997 / JCM 8858 / NBRC 14720 / NCIMB 2260 / Gabara) (Halobacterium pharaonis).